Consider the following 211-residue polypeptide: Putative 3-methyladenine DNA glycosylase (211 aa).

It belongs to the DNA glycosylase MPG family.

In Granulibacter bethesdensis (strain ATCC BAA-1260 / CGDNIH1), this protein is Putative 3-methyladenine DNA glycosylase.